A 201-amino-acid polypeptide reads, in one-letter code: Holliday junction branch migration complex subunit RuvA (201 aa).

The interval 1-64 is domain I; it reads MYEYIKGKYI…QDFIGLYGFL (64 aa). The tract at residues 65–143 is domain II; it reads TKDELEMFNK…STDISKGNSE (79 aa). The flexible linker stretch occupies residues 144 to 154; that stretch reads INNLDVDYDEH. Residues 154-201 are domain III; it reads HSKKLEEVRFALNSLGYSEKETDRAINNVDKSEGIENIIKSCLRFLMN.

This sequence belongs to the RuvA family. In terms of assembly, homotetramer. Forms an RuvA(8)-RuvB(12)-Holliday junction (HJ) complex. HJ DNA is sandwiched between 2 RuvA tetramers; dsDNA enters through RuvA and exits via RuvB. An RuvB hexamer assembles on each DNA strand where it exits the tetramer. Each RuvB hexamer is contacted by two RuvA subunits (via domain III) on 2 adjacent RuvB subunits; this complex drives branch migration. In the full resolvosome a probable DNA-RuvA(4)-RuvB(12)-RuvC(2) complex forms which resolves the HJ.

Its subcellular location is the cytoplasm. The RuvA-RuvB-RuvC complex processes Holliday junction (HJ) DNA during genetic recombination and DNA repair, while the RuvA-RuvB complex plays an important role in the rescue of blocked DNA replication forks via replication fork reversal (RFR). RuvA specifically binds to HJ cruciform DNA, conferring on it an open structure. The RuvB hexamer acts as an ATP-dependent pump, pulling dsDNA into and through the RuvAB complex. HJ branch migration allows RuvC to scan DNA until it finds its consensus sequence, where it cleaves and resolves the cruciform DNA. The protein is Holliday junction branch migration complex subunit RuvA of Clostridium acetobutylicum (strain ATCC 824 / DSM 792 / JCM 1419 / IAM 19013 / LMG 5710 / NBRC 13948 / NRRL B-527 / VKM B-1787 / 2291 / W).